A 127-amino-acid chain; its full sequence is Small ribosomal subunit protein uS11 (127 aa).

It belongs to the universal ribosomal protein uS11 family. In terms of assembly, part of the 30S ribosomal subunit. Interacts with proteins S7 and S18. Binds to IF-3.

Located on the platform of the 30S subunit, it bridges several disparate RNA helices of the 16S rRNA. Forms part of the Shine-Dalgarno cleft in the 70S ribosome. In Chlorobium chlorochromatii (strain CaD3), this protein is Small ribosomal subunit protein uS11.